A 477-amino-acid polypeptide reads, in one-letter code: Aspartyl/glutamyl-tRNA(Asn/Gln) amidotransferase subunit B (477 aa).

Belongs to the GatB/GatE family. GatB subfamily. In terms of assembly, heterotrimer of A, B and C subunits.

It carries out the reaction L-glutamyl-tRNA(Gln) + L-glutamine + ATP + H2O = L-glutaminyl-tRNA(Gln) + L-glutamate + ADP + phosphate + H(+). The catalysed reaction is L-aspartyl-tRNA(Asn) + L-glutamine + ATP + H2O = L-asparaginyl-tRNA(Asn) + L-glutamate + ADP + phosphate + 2 H(+). Functionally, allows the formation of correctly charged Asn-tRNA(Asn) or Gln-tRNA(Gln) through the transamidation of misacylated Asp-tRNA(Asn) or Glu-tRNA(Gln) in organisms which lack either or both of asparaginyl-tRNA or glutaminyl-tRNA synthetases. The reaction takes place in the presence of glutamine and ATP through an activated phospho-Asp-tRNA(Asn) or phospho-Glu-tRNA(Gln). This Oenococcus oeni (strain ATCC BAA-331 / PSU-1) protein is Aspartyl/glutamyl-tRNA(Asn/Gln) amidotransferase subunit B.